We begin with the raw amino-acid sequence, 1392 residues long: DNA-directed RNA polymerase subunit beta'' (1392 aa).

Residues cysteine 224, cysteine 295, cysteine 302, and cysteine 305 each coordinate Zn(2+).

This sequence belongs to the RNA polymerase beta' chain family. RpoC2 subfamily. In terms of assembly, in plastids the minimal PEP RNA polymerase catalytic core is composed of four subunits: alpha, beta, beta', and beta''. When a (nuclear-encoded) sigma factor is associated with the core the holoenzyme is formed, which can initiate transcription. Zn(2+) serves as cofactor.

The protein localises to the plastid. Its subcellular location is the chloroplast. The catalysed reaction is RNA(n) + a ribonucleoside 5'-triphosphate = RNA(n+1) + diphosphate. DNA-dependent RNA polymerase catalyzes the transcription of DNA into RNA using the four ribonucleoside triphosphates as substrates. This Nicotiana tomentosiformis (Tobacco) protein is DNA-directed RNA polymerase subunit beta''.